A 258-amino-acid polypeptide reads, in one-letter code: Phosphoadenosine 5'-phosphosulfate reductase (258 aa).

The active-site Nucleophile; cysteine thiosulfonate intermediate is the cysteine 244.

It belongs to the PAPS reductase family. CysH subfamily.

The protein localises to the cytoplasm. The enzyme catalyses [thioredoxin]-disulfide + sulfite + adenosine 3',5'-bisphosphate + 2 H(+) = [thioredoxin]-dithiol + 3'-phosphoadenylyl sulfate. It participates in sulfur metabolism; hydrogen sulfide biosynthesis; sulfite from sulfate: step 3/3. Catalyzes the formation of sulfite from phosphoadenosine 5'-phosphosulfate (PAPS) using thioredoxin as an electron donor. This chain is Phosphoadenosine 5'-phosphosulfate reductase, found in Vibrio vulnificus (strain YJ016).